A 400-amino-acid chain; its full sequence is LIM/homeobox protein Lhx3 (400 aa).

LIM zinc-binding domains lie at 34–84 and 93–147; these read CAGC…CKDD and CAAC…CKAD. At Ser74 the chain carries Phosphoserine. The homeobox DNA-binding region spans 160–219; that stretch reads AKRPRTTITAKQLETLKSAYNTSPKPARHVREQLSSETGLDMRVVQVWFQNRRAKEKRLK. Disordered stretches follow at residues 215–280 and 297–400; these read EKRL…SSLG and TLDH…HAQF. At Tyr230 the chain carries Phosphotyrosine. A phosphoserine mark is found at Ser237 and Ser241. Composition is skewed to pro residues over residues 319-334 and 352-361; these read GIPP…PGPQ and SGPPGGPPPM. The segment covering 368 to 380 has biased composition (polar residues); sequence GPSSDLSTESSSG.

In terms of assembly, interacts with POU1F1. At neuronal promoters, interacts with LDB1, in motor neurons LDB1 is displaced by ISL1 and a ternary complex is formed in which ISL1 contacts both LHX3 and LDB1; allosteric structural changes in the DNA binding domain of LHX3, induced by the ISL1-LHX3 interaction, may explain differences in sequence specificity of the different complexes. Interacts with LDB2. May interact with CITED2/MRG1. Mostly expressed in the pituitary anterior and intermediate lobes. It is also expressed in the pineal gland and transiently in the primordia of motor neurons including the spinal cord, pons and medulla oblongata.

The protein localises to the nucleus. Its function is as follows. Transcription factor. Recognizes and binds to the consensus sequence motif 5'-AATTAATTA-3' in the regulatory elements of target genes, such as glycoprotein hormones alpha chain CGA and visual system homeobox CHX10, positively modulating transcription; transcription can be co-activated by LDB2. Synergistically enhances transcription from the prolactin promoter in cooperation with POU1F1/Pit-1. Required for the establishment of the specialized cells of the pituitary gland and the nervous system. Involved in the development of interneurons and motor neurons in cooperation with LDB1 and ISL1. The protein is LIM/homeobox protein Lhx3 (Lhx3) of Mus musculus (Mouse).